The primary structure comprises 391 residues: Putative B3 domain-containing protein Os08g0325100 (391 aa).

A DNA-binding region (TF-B3) is located at residues 32-125; it reads GDFQHEIRGE…QFDVIIFDQV (94 aa). The tract at residues 143-232 is disordered; the sequence is VQEGRTDATE…SSRAHPQPMP (90 aa). Residues 172–226 show a composition bias toward polar residues; that stretch reads EGRTNATETLNSSRAHSQPMPMQTPATETLNSSRAHSQDMPMQSPATETLNSSRA.

The protein localises to the nucleus. The protein is Putative B3 domain-containing protein Os08g0325100 of Oryza sativa subsp. japonica (Rice).